The chain runs to 360 residues: Phospho-N-acetylmuramoyl-pentapeptide-transferase (360 aa).

Transmembrane regions (helical) follow at residues 18 to 38 (VFSY…FISL), 73 to 93 (TMGG…WADL), 94 to 114 (SNIY…VGFV), 134 to 154 (YFWQ…IAQG), 168 to 188 (LLPQ…VGTS), 199 to 219 (GLAI…AYVT), 239 to 259 (LVIV…FNTY), 263 to 283 (VFMG…IAIL), 288 to 308 (LVLF…ILQV), and 338 to 358 (VIVR…ATLK).

Belongs to the glycosyltransferase 4 family. MraY subfamily. Requires Mg(2+) as cofactor.

The protein resides in the cell inner membrane. It catalyses the reaction UDP-N-acetyl-alpha-D-muramoyl-L-alanyl-gamma-D-glutamyl-meso-2,6-diaminopimeloyl-D-alanyl-D-alanine + di-trans,octa-cis-undecaprenyl phosphate = di-trans,octa-cis-undecaprenyl diphospho-N-acetyl-alpha-D-muramoyl-L-alanyl-D-glutamyl-meso-2,6-diaminopimeloyl-D-alanyl-D-alanine + UMP. It participates in cell wall biogenesis; peptidoglycan biosynthesis. In terms of biological role, catalyzes the initial step of the lipid cycle reactions in the biosynthesis of the cell wall peptidoglycan: transfers peptidoglycan precursor phospho-MurNAc-pentapeptide from UDP-MurNAc-pentapeptide onto the lipid carrier undecaprenyl phosphate, yielding undecaprenyl-pyrophosphoryl-MurNAc-pentapeptide, known as lipid I. This Colwellia psychrerythraea (strain 34H / ATCC BAA-681) (Vibrio psychroerythus) protein is Phospho-N-acetylmuramoyl-pentapeptide-transferase.